The following is a 29-amino-acid chain: Cytochrome b6-f complex subunit 8 (29 aa).

The chain crosses the membrane as a helical span at residues 3–23; it reads IVSLAWAVLMVVFTFSLSLVV.

It belongs to the PetN family. The 4 large subunits of the cytochrome b6-f complex are cytochrome b6, subunit IV (17 kDa polypeptide, PetD), cytochrome f and the Rieske protein, while the 4 small subunits are PetG, PetL, PetM and PetN. The complex functions as a dimer.

Its subcellular location is the plastid. It is found in the chloroplast thylakoid membrane. Its function is as follows. Component of the cytochrome b6-f complex, which mediates electron transfer between photosystem II (PSII) and photosystem I (PSI), cyclic electron flow around PSI, and state transitions. This chain is Cytochrome b6-f complex subunit 8, found in Drimys granadensis.